A 1393-amino-acid chain; its full sequence is DNA-directed RNA polymerase subunit beta' (1393 aa).

4 residues coordinate Zn(2+): Cys-72, Cys-74, Cys-87, and Cys-90. Mg(2+)-binding residues include Asp-463, Asp-465, and Asp-467. Zn(2+)-binding residues include Cys-812, Cys-887, Cys-894, and Cys-897.

This sequence belongs to the RNA polymerase beta' chain family. The RNAP catalytic core consists of 2 alpha, 1 beta, 1 beta' and 1 omega subunit. When a sigma factor is associated with the core the holoenzyme is formed, which can initiate transcription. Requires Mg(2+) as cofactor. Zn(2+) serves as cofactor.

It catalyses the reaction RNA(n) + a ribonucleoside 5'-triphosphate = RNA(n+1) + diphosphate. In terms of biological role, DNA-dependent RNA polymerase catalyzes the transcription of DNA into RNA using the four ribonucleoside triphosphates as substrates. The polypeptide is DNA-directed RNA polymerase subunit beta' (Chlamydia pneumoniae (Chlamydophila pneumoniae)).